The sequence spans 177 residues: Peptidoglycan-associated lipoprotein (177 aa).

The N-terminal stretch at 1–32 (MSRTNISALSPMQKLARNPAVIAMTLALALAG) is a signal peptide. Cys-33 is lipidated: N-palmitoyl cysteine. Residue Cys-33 is the site of S-diacylglycerol cysteine attachment. The OmpA-like domain occupies 59–176 (QQDFTVNVGD…RAVTVLGGAG (118 aa)).

The protein belongs to the Pal lipoprotein family. As to quaternary structure, the Tol-Pal system is composed of five core proteins: the inner membrane proteins TolA, TolQ and TolR, the periplasmic protein TolB and the outer membrane protein Pal. They form a network linking the inner and outer membranes and the peptidoglycan layer.

It localises to the cell outer membrane. Part of the Tol-Pal system, which plays a role in outer membrane invagination during cell division and is important for maintaining outer membrane integrity. This Agrobacterium fabrum (strain C58 / ATCC 33970) (Agrobacterium tumefaciens (strain C58)) protein is Peptidoglycan-associated lipoprotein.